The following is a 430-amino-acid chain: Citrate synthase (430 aa).

Active-site residues include histidine 305 and aspartate 363.

This sequence belongs to the citrate synthase family. In terms of assembly, homohexamer.

It catalyses the reaction oxaloacetate + acetyl-CoA + H2O = citrate + CoA + H(+). It functions in the pathway carbohydrate metabolism; tricarboxylic acid cycle; isocitrate from oxaloacetate: step 1/2. Allosterically inhibited by NADH. In Coxiella burnetii (strain RSA 493 / Nine Mile phase I), this protein is Citrate synthase (gltA).